Here is a 274-residue protein sequence, read N- to C-terminus: Formamidopyrimidine-DNA glycosylase (274 aa).

Catalysis depends on proline 2, which acts as the Schiff-base intermediate with DNA. The active-site Proton donor is the glutamate 3. Catalysis depends on lysine 58, which acts as the Proton donor; for beta-elimination activity. The DNA site is built by histidine 91 and arginine 110. The segment at 238 to 272 adopts an FPG-type zinc-finger fold; that stretch reads QVYDKTGQECVRCGTIIEKIQLGGRGTHFCPNCQR. Arginine 262 (proton donor; for delta-elimination activity) is an active-site residue.

This sequence belongs to the FPG family. In terms of assembly, monomer. The cofactor is Zn(2+).

It carries out the reaction Hydrolysis of DNA containing ring-opened 7-methylguanine residues, releasing 2,6-diamino-4-hydroxy-5-(N-methyl)formamidopyrimidine.. The catalysed reaction is 2'-deoxyribonucleotide-(2'-deoxyribose 5'-phosphate)-2'-deoxyribonucleotide-DNA = a 3'-end 2'-deoxyribonucleotide-(2,3-dehydro-2,3-deoxyribose 5'-phosphate)-DNA + a 5'-end 5'-phospho-2'-deoxyribonucleoside-DNA + H(+). Involved in base excision repair of DNA damaged by oxidation or by mutagenic agents. Acts as a DNA glycosylase that recognizes and removes damaged bases. Has a preference for oxidized purines, such as 7,8-dihydro-8-oxoguanine (8-oxoG). Has AP (apurinic/apyrimidinic) lyase activity and introduces nicks in the DNA strand. Cleaves the DNA backbone by beta-delta elimination to generate a single-strand break at the site of the removed base with both 3'- and 5'-phosphates. The sequence is that of Formamidopyrimidine-DNA glycosylase from Streptococcus pneumoniae (strain ATCC BAA-255 / R6).